Reading from the N-terminus, the 872-residue chain is Paladin (872 aa).

Positions 1-37 are disordered; sequence MGTTASAAQQVPSTVPSSENVQGNGSGSSNVEDRNSL. Gly2 carries the N-myristoyl glycine lipid modification. A coiled-coil region spans residues 186 to 210; it reads RRKENLHENLHDLEKGLRAENLELA.

The protein belongs to the paladin family.

The protein localises to the cytoplasm. It localises to the cytosol. This is Paladin (pald1) from Xenopus tropicalis (Western clawed frog).